Consider the following 86-residue polypeptide: Bradykinin-potentiating peptide 25.12 (86 aa).

A signal peptide spans 1 to 22; that stretch reads MNKRVLLVIFFVTLLIADEVNS. The segment at 67–86 is disordered; sequence APAAAAAPEEPPVEQRRRRR.

It belongs to the non-disulfide-bridged peptide (NDBP) superfamily. Long chain multifunctional peptide (group 2) family. As to expression, expressed by the venom gland.

Its subcellular location is the secreted. Functionally, inhibits angiotensin-converting enzyme (ACE), but does not serve as substrate for the enzyme. Potentiates bradykinin (BK) on the isolated guinea pig ileum as well as the isolated rat uterus for contraction. Also potentiates in vivo the depressor effect of BK on arterial blood pressure in the normotensive anesthetized rat. This chain is Bradykinin-potentiating peptide 25.12, found in Lychas mucronatus (Chinese swimming scorpion).